The following is a 157-amino-acid chain: SsrA-binding protein (157 aa).

The protein belongs to the SmpB family.

It is found in the cytoplasm. Its function is as follows. Required for rescue of stalled ribosomes mediated by trans-translation. Binds to transfer-messenger RNA (tmRNA), required for stable association of tmRNA with ribosomes. tmRNA and SmpB together mimic tRNA shape, replacing the anticodon stem-loop with SmpB. tmRNA is encoded by the ssrA gene; the 2 termini fold to resemble tRNA(Ala) and it encodes a 'tag peptide', a short internal open reading frame. During trans-translation Ala-aminoacylated tmRNA acts like a tRNA, entering the A-site of stalled ribosomes, displacing the stalled mRNA. The ribosome then switches to translate the ORF on the tmRNA; the nascent peptide is terminated with the 'tag peptide' encoded by the tmRNA and targeted for degradation. The ribosome is freed to recommence translation, which seems to be the essential function of trans-translation. In Christiangramia forsetii (strain DSM 17595 / CGMCC 1.15422 / KT0803) (Gramella forsetii), this protein is SsrA-binding protein.